A 272-amino-acid polypeptide reads, in one-letter code: Hydroxyethylthiazole kinase (272 aa).

Met-45 provides a ligand contact to substrate. ATP is bound by residues Arg-121 and Thr-168. Gly-195 contacts substrate.

The protein belongs to the Thz kinase family. As to quaternary structure, homotrimer. The cofactor is Mg(2+).

The enzyme catalyses 5-(2-hydroxyethyl)-4-methylthiazole + ATP = 4-methyl-5-(2-phosphooxyethyl)-thiazole + ADP + H(+). It functions in the pathway cofactor biosynthesis; thiamine diphosphate biosynthesis; 4-methyl-5-(2-phosphoethyl)-thiazole from 5-(2-hydroxyethyl)-4-methylthiazole: step 1/1. In terms of biological role, catalyzes the phosphorylation of the hydroxyl group of 4-methyl-5-beta-hydroxyethylthiazole (THZ). The sequence is that of Hydroxyethylthiazole kinase from Bacillus subtilis (strain 168).